A 283-amino-acid chain; its full sequence is 32 kDa beta-galactoside-binding lectin (283 aa).

Galectin domains are found at residues 17–148 (YRSL…VHWG) and 156–283 (YESG…IQIQ). Position 217–223 (217–223 (WGNEERE)) interacts with a beta-D-galactoside.

As to quaternary structure, (Microbial infection) Interacts (via domain galectin 2) with goat TMEM147. Interacts (via domain galectin 1) with goat TMEM63A.

It is found in the membrane. Its function is as follows. Binds galactose. Exerts immunomodulatory effects on host peripheral blood mononuclear cells to down-regulate host immune response. Hemagglutinates human, dog, rabbit, chicken and mouse erythrocytes but does not hemagglutinate the erythrocytes of goat, its natural host. In Haemonchus contortus (Barber pole worm), this protein is 32 kDa beta-galactoside-binding lectin (GAL-1).